The following is a 96-amino-acid chain: Antitoxin ParD4 (96 aa).

Belongs to the ParD antitoxin family.

Its function is as follows. Antitoxin component of a type II toxin-antitoxin (TA) system. Neutralizes the effect of cognate toxin ParE4, but no other RelE or ParE toxin. In Caulobacter vibrioides (strain ATCC 19089 / CIP 103742 / CB 15) (Caulobacter crescentus), this protein is Antitoxin ParD4 (parD4).